The chain runs to 263 residues: Ribonuclease HII (263 aa).

An RNase H type-2 domain is found at 71–262 (QAIAGIDEVG…VKSMCCDSTN (192 aa)). Residues Asp77, Glu78, and Asp172 each contribute to the a divalent metal cation site.

Belongs to the RNase HII family. Requires Mn(2+) as cofactor. The cofactor is Mg(2+).

The protein resides in the cytoplasm. The catalysed reaction is Endonucleolytic cleavage to 5'-phosphomonoester.. Endonuclease that specifically degrades the RNA of RNA-DNA hybrids. This is Ribonuclease HII from Streptococcus pyogenes serotype M4 (strain MGAS10750).